A 193-amino-acid polypeptide reads, in one-letter code: Orotate phosphoribosyltransferase (193 aa).

Residues Arg102, Lys103, Lys106, His108, and 129–137 (EDVVTTGGS) contribute to the 5-phospho-alpha-D-ribose 1-diphosphate site. Orotate-binding residues include Thr133 and Arg161.

It belongs to the purine/pyrimidine phosphoribosyltransferase family. PyrE subfamily. As to quaternary structure, homodimer. Mg(2+) serves as cofactor.

The enzyme catalyses orotidine 5'-phosphate + diphosphate = orotate + 5-phospho-alpha-D-ribose 1-diphosphate. The protein operates within pyrimidine metabolism; UMP biosynthesis via de novo pathway; UMP from orotate: step 1/2. In terms of biological role, catalyzes the transfer of a ribosyl phosphate group from 5-phosphoribose 1-diphosphate to orotate, leading to the formation of orotidine monophosphate (OMP). This chain is Orotate phosphoribosyltransferase, found in Prochlorococcus marinus (strain NATL1A).